We begin with the raw amino-acid sequence, 553 residues long: Solute carrier family 2, facilitated glucose transporter member 10 (553 aa).

The Cytoplasmic segment spans residues 1 to 15 (MGLRSTTLVLAATSS). The helical transmembrane segment at 16–36 (LLGGLIFGYELGIISGALLML) threads the bilayer. Over 37–48 (KTVFQLTCFEQE) the chain is Extracellular. Residues 49–69 (ALVSAVLFGALLASLIGGFII) form a helical membrane-spanning segment. Topologically, residues 70–82 (DRSGRRTSIMGSN) are cytoplasmic. The chain crosses the membrane as a helical span at residues 83 to 103 (LVVLAGSIILIATSSFWWLVV). Residues 104-105 (GR) are Extracellular-facing. The chain crosses the membrane as a helical span at residues 106–126 (VTVGFAISISSMACCIYVSEI). Residues 127–132 (VRPHQR) are Cytoplasmic-facing. A helical membrane pass occupies residues 133 to 153 (GTLVSLYETGITVGILISYAM). At 154–165 (NYFLSAVNDGWK) the chain is on the extracellular side. A helical transmembrane segment spans residues 166 to 186 (YMFGLAIIPAAFQFIVILFLP). Residues 187 to 240 (SKPHTLNFWEQDSDNGFIELEEAGESGEFKPDTYDKQYTFLDLFRSKDNMRTRT) are Cytoplasmic-facing. The chain crosses the membrane as a helical span at residues 241-261 (LLGLGLVLFQQFTGQPNVLYY). 250–251 (QQ) contacts D-glucose. Residues 262-277 (ASTIFRSVGFQSNSSA) lie on the Extracellular side of the membrane. Asn-274 carries an N-linked (GlcNAc...) asparagine glycan. Residues 278–298 (VLASVGLGVVKVASTLIAICF) form a helical membrane-spanning segment. Residues 299-305 (ADKAGRR) lie on the Cytoplasmic side of the membrane. A helical transmembrane segment spans residues 306–326 (ILLLAGCIVMTIAISGIGIVS). Over 327-413 (FMVELDSHRD…PPAGPDSNYA (87 aa)) the chain is Extracellular. N-linked (GlcNAc...) asparagine glycans are attached at residues Asn-344, Asn-351, and Asn-400. A helical membrane pass occupies residues 414–434 (ILNWITLLSMMAFVSAFSIGF). The Cytoplasmic segment spans residues 435 to 462 (GPMTWLVLSEIYPADIRGRAFAFCNSFN). Trp-439 serves as a coordination point for D-glucose. A helical transmembrane segment spans residues 463–482 (WAANLLITLTFLEVIGSIGL). A topological domain (extracellular) is located at residue Gly-483. Residues 484–504 (WTFLLYGGVGLLAIAFIYFFI) traverse the membrane as a helical segment. At 505–553 (PETKGQSLEEIDQQLSSKRISKRRETSKGVRKRPSTGPPYQRVGKSNWT) the chain is on the cytoplasmic side. The tract at residues 522–553 (KRISKRRETSKGVRKRPSTGPPYQRVGKSNWT) is disordered.

It belongs to the major facilitator superfamily. Sugar transporter (TC 2.A.1.1) family. Glucose transporter subfamily.

Its subcellular location is the endomembrane system. It localises to the cytoplasm. The protein localises to the perinuclear region. It carries out the reaction D-glucose(out) = D-glucose(in). Functionally, facilitative glucose transporter required for the development of the cardiovascular system. The polypeptide is Solute carrier family 2, facilitated glucose transporter member 10 (Xenopus laevis (African clawed frog)).